A 120-amino-acid chain; its full sequence is MLKFTEEHEWLKIDGDVATVGITEHAAGQLGDLVFVELPEAGSTFSKGDTAATVESVKAASDVYCPLDGEIVEANQAIVDDPSLVNSDPQGAAWFFKLKLADPDAAKALLDEAAYKELVA.

One can recognise a Lipoyl-binding domain in the interval 17–99 (VATVGITEHA…QGAAWFFKLK (83 aa)). At Lys58 the chain carries N6-lipoyllysine.

Belongs to the GcvH family. The glycine cleavage system is composed of four proteins: P, T, L and H. (R)-lipoate is required as a cofactor.

Functionally, the glycine cleavage system catalyzes the degradation of glycine. The H protein shuttles the methylamine group of glycine from the P protein to the T protein. The sequence is that of Glycine cleavage system H protein from Sinorhizobium medicae (strain WSM419) (Ensifer medicae).